The chain runs to 174 residues: Transmembrane protein 208 (174 aa).

Transmembrane regions (helical) follow at residues 30 to 50 (NMAI…FEVT), 54 to 74 (VFMH…MAFM), and 111 to 131 (GTLL…LAPI). The disordered stretch occupies residues 151–174 (AQDDNPQVDEKKQKKMDRRMRRMR). The span at 163-174 (QKKMDRRMRRMR) shows a compositional bias: basic residues.

The protein belongs to the TMEM208 family. Interacts with fz. In terms of tissue distribution, expressed in the brain.

It is found in the endoplasmic reticulum membrane. May play an important role during development and helps to maintain proper levels of Fz. This is Transmembrane protein 208 from Drosophila melanogaster (Fruit fly).